A 449-amino-acid chain; its full sequence is Phosphoglucosamine mutase (449 aa).

Residue serine 105 is the Phosphoserine intermediate of the active site. The Mg(2+) site is built by serine 105, aspartate 242, aspartate 244, and aspartate 246. Serine 105 is subject to Phosphoserine.

Belongs to the phosphohexose mutase family. Requires Mg(2+) as cofactor. In terms of processing, activated by phosphorylation.

It carries out the reaction alpha-D-glucosamine 1-phosphate = D-glucosamine 6-phosphate. In terms of biological role, catalyzes the conversion of glucosamine-6-phosphate to glucosamine-1-phosphate. The protein is Phosphoglucosamine mutase of Clavibacter sepedonicus (Clavibacter michiganensis subsp. sepedonicus).